An 84-amino-acid chain; its full sequence is Small ribosomal subunit protein uS17 (84 aa).

This sequence belongs to the universal ribosomal protein uS17 family. As to quaternary structure, part of the 30S ribosomal subunit.

One of the primary rRNA binding proteins, it binds specifically to the 5'-end of 16S ribosomal RNA. The protein is Small ribosomal subunit protein uS17 of Clostridium perfringens (strain SM101 / Type A).